The primary structure comprises 632 residues: tRNA uridine 5-carboxymethylaminomethyl modification enzyme MnmG (632 aa).

13–18 (GGGHAG) contributes to the FAD binding site. 273-287 (GPRYCPSIEDKIHRF) lines the NAD(+) pocket.

This sequence belongs to the MnmG family. As to quaternary structure, homodimer. Heterotetramer of two MnmE and two MnmG subunits. It depends on FAD as a cofactor.

The protein localises to the cytoplasm. Its function is as follows. NAD-binding protein involved in the addition of a carboxymethylaminomethyl (cmnm) group at the wobble position (U34) of certain tRNAs, forming tRNA-cmnm(5)s(2)U34. The polypeptide is tRNA uridine 5-carboxymethylaminomethyl modification enzyme MnmG (Psychrobacter arcticus (strain DSM 17307 / VKM B-2377 / 273-4)).